The following is a 600-amino-acid chain: Putative heme-binding protein NP_2262A (600 aa).

A heme-binding site is contributed by H180. The interval 261–289 (TSETGHGGADSQTSSESSGGRPSTDPSHD) is disordered. A compositionally biased stretch (polar residues) spans 270 to 285 (DSQTSSESSGGRPSTD). The ABM domain occupies 510–598 (GTMGMFYTVK…VLADRPRHVF (89 aa)).

The protein in the N-terminal section; belongs to the ChdC family.

The chain is Putative heme-binding protein NP_2262A from Natronomonas pharaonis (strain ATCC 35678 / DSM 2160 / CIP 103997 / JCM 8858 / NBRC 14720 / NCIMB 2260 / Gabara) (Halobacterium pharaonis).